The primary structure comprises 207 residues: Early nodulin-like protein 11 (207 aa).

A signal peptide spans 1–24; sequence MVSLISIVSVVFLLFTTFYHFGEA. Positions 25–130 constitute a Phytocyanin domain; that stretch reads RIINVGGSLD…GEKVTVVVQS (106 aa). The N-linked (GlcNAc...) asparagine glycan is linked to Asn-43. A disulfide bridge links Cys-83 with Cys-118. Residues 129–179 are disordered; sequence QSPNHPKPGPAAVTPTLPPKPSTTPAAPAPAPPTPSPKSSTSTMAPAPAPA. Residues 144–164 show a composition bias toward pro residues; sequence TLPPKPSTTPAAPAPAPPTPS. Residues 165 to 179 are compositionally biased toward low complexity; that stretch reads PKSSTSTMAPAPAPA. Residue Ser-181 is the site of GPI-anchor amidated serine attachment. A propeptide spans 182-207 (removed in mature form); it reads SAVGLVAGNGIFWASTLVAVIGLAFA.

This sequence belongs to the early nodulin-like (ENODL) family. In terms of tissue distribution, confined to flowers and siliques.

The protein localises to the cell membrane. May act as a carbohydrate transporter. Required, together with ENODL11, ENODL12, ENODL13, ENODL14 and ENODL15, for male-female communication and pollen tube reception and burst at the synergid cell surface of the female gametophyte. This Arabidopsis thaliana (Mouse-ear cress) protein is Early nodulin-like protein 11.